We begin with the raw amino-acid sequence, 66 residues long: Neurotoxin BmK AGP-SYPU1 (66 aa).

In terms of domain architecture, LCN-type CS-alpha/beta spans 2–64; it reads RDAYIAQNYN…KPIRIPGKCH (63 aa). Intrachain disulfides connect cysteine 12–cysteine 63, cysteine 16–cysteine 36, cysteine 22–cysteine 46, and cysteine 26–cysteine 48. The propeptide at 65-66 is removed by a carboxypeptidase; sequence RR.

Expressed by the venom gland.

The protein resides in the secreted. In terms of biological role, alpha toxins bind voltage-independently at site-3 of sodium channels (Nav) and inhibit the inactivation of the activated channels, thereby blocking neuronal transmission. This toxin has a strong analgesic effect when administered to mice by intraperitoneal injection. The protein is Neurotoxin BmK AGP-SYPU1 of Olivierus martensii (Manchurian scorpion).